Here is a 1439-residue protein sequence, read N- to C-terminus: Fanconi anemia group D2 protein (1439 aa).

K563 participates in a covalent cross-link: Glycyl lysine isopeptide (Lys-Gly) (interchain with G-Cter in ubiquitin).

The protein belongs to the Fanconi anemia protein FANCD2 family. Homodimer; cannot be ubiquitinated and does not bind DNA. Part of a FANCI-FANCD2 heterodimeric complex that binds and scans dsDNA for DNA damage. Interacts directly with FANCE and FANCI. Interacts with USP1 and MEN1. The ubiquitinated form specifically interacts with BRCA1 and BLM. Both the nonubiquitinated and the monoubiquitinated forms interact with BRCA2; this interaction is mediated by phosphorylated FANCG and the complex also includes XCCR3. The ubiquitinated form specifically interacts with MTMR15/FAN1 (via UBZ-type zinc finger), leading to recruit MTMR15/FAN1 to sites of DNA damage. Interacts with DCLRE1B/Apollo. Interacts with POLN. Interacts with UHRF1 and UHRF2; these interactions promote FANCD2 activation. Monoubiquitinated on Lys-563 during S phase and upon genotoxic stress. Deubiquitinated by USP1 as cells enter G2/M, or once DNA repair is completed. Monoubiquitination prevents DNA release from the FANCI-FANCD2 complex. FANCD2 is only ubiquitinated in the FANCI-FANCD2 complex and the monoubiquitination of FANCD2 is promoted by phosphorylation of FANCI. In terms of processing, phosphorylated in response to various genotoxic stresses by ATM and/or ATR.

Its subcellular location is the nucleus. Its function is as follows. Required for maintenance of chromosomal stability. Promotes accurate and efficient pairing of homologs during meiosis. Involved in the repair of DNA double-strand breaks, both by homologous recombination and single-strand annealing. The FANCI-FANCD2 complex binds and scans double-stranded DNA (dsDNA) for DNA damage; this complex stalls at DNA junctions between double-stranded DNA and single-stranded DNA. May participate in S phase and G2 phase checkpoint activation upon DNA damage. Plays a role in preventing breakage and loss of missegregating chromatin at the end of cell division, particularly after replication stress. Required for the targeting, or stabilization, of BLM to non-centromeric abnormal structures induced by replicative stress. Promotes BRCA2/FANCD1 loading onto damaged chromatin. May also be involved in B-cell immunoglobulin isotype switching. The polypeptide is Fanconi anemia group D2 protein (Gallus gallus (Chicken)).